Consider the following 165-residue polypeptide: Small ribosomal subunit protein uS5 (165 aa).

The 64-residue stretch at 10-73 (LNEKLIAVNR…EKARRNMVTV (64 aa)) folds into the S5 DRBM domain.

This sequence belongs to the universal ribosomal protein uS5 family. Part of the 30S ribosomal subunit. Contacts proteins S4 and S8.

With S4 and S12 plays an important role in translational accuracy. In terms of biological role, located at the back of the 30S subunit body where it stabilizes the conformation of the head with respect to the body. This Photobacterium profundum (strain SS9) protein is Small ribosomal subunit protein uS5.